Consider the following 65-residue polypeptide: Large ribosomal subunit protein bL35 (65 aa).

Positions 1–51 are disordered; that stretch reads MPKIKTNRGAAKRFRKSASGRVKRGNAFTSHILTHKTRKNKRNLRGTSMVS. Composition is skewed to basic residues over residues 10 to 24 and 33 to 44; these read AAKRFRKSASGRVKR and LTHKTRKNKRNL.

The protein belongs to the bacterial ribosomal protein bL35 family.

In Pelobacter propionicus (strain DSM 2379 / NBRC 103807 / OttBd1), this protein is Large ribosomal subunit protein bL35.